The primary structure comprises 251 residues: tRNA pseudouridine synthase A (251 aa).

Catalysis depends on aspartate 52, which acts as the Nucleophile. Substrate is bound at residue tyrosine 113.

The protein belongs to the tRNA pseudouridine synthase TruA family. In terms of assembly, homodimer.

The enzyme catalyses uridine(38/39/40) in tRNA = pseudouridine(38/39/40) in tRNA. In terms of biological role, formation of pseudouridine at positions 38, 39 and 40 in the anticodon stem and loop of transfer RNAs. The protein is tRNA pseudouridine synthase A of Brucella anthropi (strain ATCC 49188 / DSM 6882 / CCUG 24695 / JCM 21032 / LMG 3331 / NBRC 15819 / NCTC 12168 / Alc 37) (Ochrobactrum anthropi).